A 126-amino-acid chain; its full sequence is MSWQTYVDTNLVGTGAVTQAAIIGHDGNTWATSAGFAVSPANGAALANAFKDATAIRSNGFELAGTRYVTIRADDRSVYGKKGSAGVITVKTSKAILIGVYNEKIQPGTAANVVEKLADYLIGQGF.

Residue S2 is modified to Blocked amino end (Ser). K104 carries the N6,N6,N6-trimethyllysine modification.

The protein belongs to the profilin family. As to quaternary structure, occurs in many kinds of cells as a complex with monomeric actin in a 1:1 ratio.

It is found in the cytoplasm. The protein resides in the cytoskeleton. Binds to actin and affects the structure of the cytoskeleton. At high concentrations, profilin prevents the polymerization of actin, whereas it enhances it at low concentrations. By binding to PIP2, it inhibits the formation of IP3 and DG. This is Profilin-2 from Acanthamoeba castellanii (Amoeba).